A 133-amino-acid chain; its full sequence is Small ribosomal subunit protein uS8 (133 aa).

The protein belongs to the universal ribosomal protein uS8 family. In terms of assembly, part of the 30S ribosomal subunit. Contacts proteins S5 and S12.

Functionally, one of the primary rRNA binding proteins, it binds directly to 16S rRNA central domain where it helps coordinate assembly of the platform of the 30S subunit. The sequence is that of Small ribosomal subunit protein uS8 from Gloeobacter violaceus (strain ATCC 29082 / PCC 7421).